Reading from the N-terminus, the 311-residue chain is Malate dehydrogenase (311 aa).

Residues 7–13 (GAAGGIG) and Asp-34 contribute to the NAD(+) site. Arg-81 and Arg-87 together coordinate substrate. NAD(+) is bound by residues Asn-94 and 117–119 (ITN). Residues Asn-119 and Arg-153 each coordinate substrate. Residue His-177 is the Proton acceptor of the active site. Residue Met-227 participates in NAD(+) binding.

Belongs to the LDH/MDH superfamily. MDH type 1 family. Homodimer.

It carries out the reaction (S)-malate + NAD(+) = oxaloacetate + NADH + H(+). Its function is as follows. Catalyzes the reversible oxidation of malate to oxaloacetate. The chain is Malate dehydrogenase from Haemophilus influenzae (strain PittEE).